The chain runs to 194 residues: Phosphoheptose isomerase (194 aa).

Residues 37-194 (ISNSFKQGGK…LIEFEMAKQA (158 aa)) enclose the SIS domain. Substrate is bound at residue 52 to 54 (NGG). Zn(2+) is bound by residues histidine 61 and glutamate 65. Residues glutamate 65, 93–94 (ND), 119–121 (STS), serine 124, and glutamine 172 each bind substrate. Zn(2+)-binding residues include glutamine 172 and histidine 180.

Belongs to the SIS family. GmhA subfamily. As to quaternary structure, homotetramer. Requires Zn(2+) as cofactor.

It localises to the cytoplasm. The catalysed reaction is 2 D-sedoheptulose 7-phosphate = D-glycero-alpha-D-manno-heptose 7-phosphate + D-glycero-beta-D-manno-heptose 7-phosphate. It functions in the pathway carbohydrate biosynthesis; D-glycero-D-manno-heptose 7-phosphate biosynthesis; D-glycero-alpha-D-manno-heptose 7-phosphate and D-glycero-beta-D-manno-heptose 7-phosphate from sedoheptulose 7-phosphate: step 1/1. It participates in bacterial outer membrane biogenesis; LOS core biosynthesis. Catalyzes the isomerization of sedoheptulose 7-phosphate in D-glycero-D-manno-heptose 7-phosphate. The polypeptide is Phosphoheptose isomerase (Haemophilus influenzae (strain ATCC 51907 / DSM 11121 / KW20 / Rd)).